Reading from the N-terminus, the 139-residue chain is General odorant-binding protein 56a (139 aa).

Residues 1 to 19 (MNSYFVIALSALFVTLAVG) form the signal peptide. N-linked (GlcNAc...) asparagine glycosylation is present at N23. Cystine bridges form between C39–C71, C67–C118, and C109–C127.

The protein belongs to the PBP/GOBP family. In terms of tissue distribution, expressed in ventral pits of larvae. In adults, it is not specifically expressed in chemosensory organs. Also expressed in stalk cells at the proximal tip of the wing disk.

Its subcellular location is the secreted. In terms of biological role, present in the aqueous fluid surrounding olfactory sensory dendrites and are thought to aid in the capture and transport of hydrophobic odorants into and through this fluid. The protein is General odorant-binding protein 56a (Obp56a) of Drosophila melanogaster (Fruit fly).